The sequence spans 172 residues: Large ribosomal subunit protein bL9 (172 aa).

Belongs to the bacterial ribosomal protein bL9 family.

Its function is as follows. Binds to the 23S rRNA. In Chlamydia caviae (strain ATCC VR-813 / DSM 19441 / 03DC25 / GPIC) (Chlamydophila caviae), this protein is Large ribosomal subunit protein bL9.